Here is a 350-residue protein sequence, read N- to C-terminus: NADH-quinone oxidoreductase subunit H (350 aa).

The next 8 membrane-spanning stretches (helical) occupy residues 31–51 (LMLL…LFLI), 102–122 (LLAP…IPFG), 132–152 (LGVL…WMAG), 171–191 (MLSY…MAGS), 205–225 (WFIF…NAEF), 263–283 (FMIG…APFG), 286–306 (FIPS…LYMW), and 322–342 (FAWK…GFGL).

Belongs to the complex I subunit 1 family. As to quaternary structure, NDH-1 is composed of 14 different subunits. Subunits NuoA, H, J, K, L, M, N constitute the membrane sector of the complex.

It is found in the cell membrane. The enzyme catalyses a quinone + NADH + 5 H(+)(in) = a quinol + NAD(+) + 4 H(+)(out). In terms of biological role, NDH-1 shuttles electrons from NADH, via FMN and iron-sulfur (Fe-S) centers, to quinones in the respiratory chain. The immediate electron acceptor for the enzyme in this species is believed to be ubiquinone. Couples the redox reaction to proton translocation (for every two electrons transferred, four hydrogen ions are translocated across the cytoplasmic membrane), and thus conserves the redox energy in a proton gradient. This subunit may bind ubiquinone. In Carboxydothermus hydrogenoformans (strain ATCC BAA-161 / DSM 6008 / Z-2901), this protein is NADH-quinone oxidoreductase subunit H.